The sequence spans 147 residues: uncharacterized protein (147 aa).

This is an uncharacterized protein from Archaeoglobus fulgidus (strain ATCC 49558 / DSM 4304 / JCM 9628 / NBRC 100126 / VC-16).